The chain runs to 594 residues: Dictomallein-4 (594 aa).

The signal sequence occupies residues 1–18 (MKLVLIFLIINFLLIINC). The 262-residue stretch at 147-408 (PDVSQDYTLK…QNYFKNSIYY (262 aa)) folds into the Peptidase M66 domain. Residue histidine 300 coordinates Zn(2+). Residue glutamate 301 is part of the active site. The Zn(2+) site is built by histidine 304 and histidine 310.

The protein belongs to the dictomallein family. Zn(2+) serves as cofactor.

It is found in the secreted. This is Dictomallein-4 (dtmlD) from Dictyostelium discoideum (Social amoeba).